The chain runs to 777 residues: Hepatocyte growth factor-regulated tyrosine kinase substrate (777 aa).

The 129-residue stretch at 15–143 (ATSQLLLETD…IMKVEGHVFP (129 aa)) folds into the VHS domain. Residues 160–220 (WVDAEECHRC…VCEPCFEQLN (61 aa)) form an FYVE-type zinc finger. Zn(2+) contacts are provided by Cys166, Cys169, Cys182, Cys185, Cys190, and Cys193. Lys207 carries the N6-acetyllysine modification. Zn(2+) contacts are provided by Cys212 and Cys215. The interval 223–319 (AEGKAASTTE…SPVNSSAPLA (97 aa)) is disordered. An interaction with SNX1 region spans residues 225–541 (GKAASTTELP…QRLQEQEKER (317 aa)). The 20-residue stretch at 258-277 (QEEEELQLALALSQSEAEEK) folds into the UIM domain. A compositionally biased stretch (low complexity) spans 292–311 (AEPTPVASSAPPASSLYSSP). Phosphotyrosine is present on residues Tyr308, Tyr329, and Tyr334. The disordered stretch occupies residues 338–370 (KQEEARKSPTPSAPVPLTEPTAQPGEGHAIPAN). Residues 443 to 541 (SINTMHPQLL…QRLQEQEKER (99 aa)) are interaction with SNAP25 and TRAK2. The interaction with STAM stretch occupies residues 452–570 (LELLNQLDER…FSLPYAQLQA (119 aa)). An interaction with NF2 region spans residues 478–777 (ARGALSALRE…GSEAQLISFD (300 aa)). An N6-succinyllysine modification is found at Lys549. Residues 645-658 (AAAQGPAGPTTSPA) are compositionally biased toward low complexity. Disordered stretches follow at residues 645-698 (AAAQ…YMGS) and 712-777 (NLMP…ISFD). Polar residues-rich tracts occupy residues 659–698 (YSSY…YMGS) and 730–739 (PYISGQQPVY). Over residues 753–777 (PPVAQQPPAQGPPAQGSEAQLISFD) the composition is skewed to low complexity.

In terms of assembly, component of the ESCRT-0 complex composed of STAM or STAM2 and HGS. Part of a complex at least composed of HSG, STAM2 (or probably STAM) and EPS15. Interacts with STAM. Interacts with STAM2. Interacts with EPS15; the interaction is direct, calcium-dependent and inhibited by SNAP25. Identified in a complex with STAM and LITAF. Found in a complex with STAM and E3 ligase ITCH and DTX3L. Interacts with E3 ligase DTX3L; the interaction brings together STAM and HSG, promotes their recruitment to early endosomes and decreases STAM and HGS ubiquitination by ITCH. Interacts with NF2; the interaction is direct. Interacts with ubiquitin; the interaction is direct. Interacts with VPS37C. Interacts with SMAD1, SMAD2 and SMAD3. Interacts with TSG101; the interaction mediates the association with the ESCRT-I complex. Interacts with SNAP25; the interaction is direct and decreases with addition of increasing concentrations of free calcium. Interacts with SNX1; the interaction is direct. Component of a 550 kDa membrane complex at least composed of HGS and SNX1 but excluding EGFR. Interacts with TRAK1. Interacts with TRAK2. Component of the CART complex, at least composed of ACTN4, HGS/HRS, MYO5B and TRIM3. Interacts (via UIM domain) with UBQLN1 (via ubiquitin-like domain). Interacts with ARRDC3. Identified in a complex containing at least ARRDC4, AVPR2 and HGS. Interacts with LAPTM4B; promotes HGS ubiquitination. In terms of processing, phosphorylated on Tyr-334. A minor site of phosphorylation on Tyr-329 is detected. Phosphorylation occurs in response to EGF, IL-2, GM-CSF and HGF. Ubiquitinated by ITCH.

It is found in the cytoplasm. The protein localises to the early endosome membrane. Its subcellular location is the endosome. The protein resides in the multivesicular body membrane. Its function is as follows. Involved in intracellular signal transduction mediated by cytokines and growth factors. When associated with STAM it suppresses DNA signaling upon stimulation by IL-2 and GM-CSF. Could be a direct effector of PI3-kinase in vesicular pathway via early endosomes and may regulate trafficking to early and late endosomes by recruiting clathrin. May concentrate ubiquitinated receptors within clathrin-coated regions. Involved in down-regulation of receptor tyrosine kinase via multivesicular body (MVBs) when complexed with STAM (ESCRT-0 complex). The ESCRT-0 complex binds ubiquitin and acts as a sorting machinery that recognizes ubiquitinated receptors and transfers them to further sequential lysosomal sorting/trafficking processes. May contribute to the efficient recruitment of SMADs to the activin receptor complex. Involved in receptor recycling via its association with the CART complex, a multiprotein complex required for efficient transferrin receptor recycling but not for EGFR degradation. The polypeptide is Hepatocyte growth factor-regulated tyrosine kinase substrate (HGS) (Bos taurus (Bovine)).